Reading from the N-terminus, the 599-residue chain is Putative clathrin assembly protein At1g03050 (599 aa).

Residues 26 to 162 enclose the ENTH domain; sequence GRSASLSELD…DFRMQARHGK (137 aa). Disordered stretches follow at residues 332-382 and 580-599; these read KQSK…PEEE and QGHM…TPQY. Composition is skewed to acidic residues over residues 341 to 359 and 373 to 382; these read ADED…EQED and EEDDVKPEEE. The span at 585-599 shows a compositional bias: polar residues; sequence LRQNQNQPYSYTPQY.

It localises to the membrane. The protein localises to the clathrin-coated pit. Its subcellular location is the golgi apparatus. The protein resides in the cytoplasmic vesicle. It is found in the clathrin-coated vesicle. The sequence is that of Putative clathrin assembly protein At1g03050 from Arabidopsis thaliana (Mouse-ear cress).